Here is a 411-residue protein sequence, read N- to C-terminus: Argininosuccinate synthase (411 aa).

ATP contacts are provided by residues 11 to 19 (AYSGGLDTS) and alanine 37. The L-citrulline site is built by tyrosine 88 and serine 93. Position 116–124 (116–124 (SHGATGKGN)) interacts with ATP. Residues threonine 120, asparagine 124, and aspartate 125 each coordinate L-aspartate. Asparagine 124 lines the L-citrulline pocket. L-citrulline contacts are provided by arginine 128, serine 181, serine 190, glutamate 271, and tyrosine 283.

Belongs to the argininosuccinate synthase family. In terms of assembly, homotetramer.

It localises to the cytoplasm. The protein localises to the cytosol. It catalyses the reaction L-citrulline + L-aspartate + ATP = 2-(N(omega)-L-arginino)succinate + AMP + diphosphate + H(+). It functions in the pathway amino-acid biosynthesis; L-arginine biosynthesis; L-arginine from L-ornithine and carbamoyl phosphate: step 2/3. Its pathway is nitrogen metabolism; urea cycle; (N(omega)-L-arginino)succinate from L-aspartate and L-citrulline: step 1/1. In terms of biological role, one of the enzymes of the urea cycle, the metabolic pathway transforming neurotoxic amonia produced by protein catabolism into inocuous urea in the liver of ureotelic animals. Catalyzes the formation of arginosuccinate from aspartate, citrulline and ATP and together with ASL it is responsible for the biosynthesis of arginine in most body tissues. The polypeptide is Argininosuccinate synthase (Xenopus laevis (African clawed frog)).